Consider the following 421-residue polypeptide: 3-oxoacyl-[acyl-carrier-protein] synthase 2 (421 aa).

In terms of domain architecture, Ketosynthase family 3 (KS3) spans M1–R417. Residues C170, H311, and H347 each act as for beta-ketoacyl synthase activity in the active site.

Belongs to the thiolase-like superfamily. Beta-ketoacyl-ACP synthases family. Homodimer.

It carries out the reaction a fatty acyl-[ACP] + malonyl-[ACP] + H(+) = a 3-oxoacyl-[ACP] + holo-[ACP] + CO2. The enzyme catalyses (9Z)-hexadecenoyl-[ACP] + malonyl-[ACP] + H(+) = 3-oxo-(11Z)-octadecenoyl-[ACP] + holo-[ACP] + CO2. Its pathway is lipid metabolism; fatty acid biosynthesis. Its function is as follows. Involved in the type II fatty acid elongation cycle. Catalyzes the elongation of a wide range of acyl-ACP by the addition of two carbons from malonyl-ACP to an acyl acceptor. Can efficiently catalyze the conversion of palmitoleoyl-ACP (cis-hexadec-9-enoyl-ACP) to cis-vaccenoyl-ACP (cis-octadec-11-enoyl-ACP), an essential step in the thermal regulation of fatty acid composition. The protein is 3-oxoacyl-[acyl-carrier-protein] synthase 2 (fabF) of Rhizobium meliloti (strain 1021) (Ensifer meliloti).